A 169-amino-acid chain; its full sequence is Peptide methionine sulfoxide reductase MsrA (169 aa).

C10 is an active-site residue.

It belongs to the MsrA Met sulfoxide reductase family.

The catalysed reaction is L-methionyl-[protein] + [thioredoxin]-disulfide + H2O = L-methionyl-(S)-S-oxide-[protein] + [thioredoxin]-dithiol. It carries out the reaction [thioredoxin]-disulfide + L-methionine + H2O = L-methionine (S)-S-oxide + [thioredoxin]-dithiol. Its function is as follows. Has an important function as a repair enzyme for proteins that have been inactivated by oxidation. Catalyzes the reversible oxidation-reduction of methionine sulfoxide in proteins to methionine. The protein is Peptide methionine sulfoxide reductase MsrA of Streptococcus agalactiae serotype III (strain NEM316).